A 627-amino-acid polypeptide reads, in one-letter code: Neutral endopeptidase (627 aa).

Positions 1–627 (MTRIQDDLFA…RAPENRLKIW (627 aa)) constitute a Peptidase M13 domain. Residue H475 coordinates Zn(2+). E476 is a catalytic residue. Zn(2+) is bound by residues H479 and E535. Catalysis depends on D539, which acts as the Proton donor.

Belongs to the peptidase M13 family. Monomer. Zn(2+) is required as a cofactor.

The protein localises to the cytoplasm. Endopeptidase with broad substrate specificity for several oligopeptides. The polypeptide is Neutral endopeptidase (pepO) (Lactococcus lactis subsp. cremoris (Streptococcus cremoris)).